A 68-amino-acid chain; its full sequence is Large ribosomal subunit protein bL33c (68 aa).

This sequence belongs to the bacterial ribosomal protein bL33 family.

Its subcellular location is the plastid. The protein resides in the chloroplast. This is Large ribosomal subunit protein bL33c from Amborella trichopoda.